The primary structure comprises 327 residues: Probable cell division protein WhiA (327 aa).

The segment at residues 275–308 (SLEELGQLADPPMTKDAVAGRIRRLLSMADRRAR) is a DNA-binding region (H-T-H motif).

It belongs to the WhiA family.

In terms of biological role, involved in cell division and chromosome segregation. In Nocardia farcinica (strain IFM 10152), this protein is Probable cell division protein WhiA.